We begin with the raw amino-acid sequence, 1107 residues long: OTU domain-containing protein 4 (1107 aa).

Methionine 1 carries the post-translational modification N-acetylmethionine. An OTU domain is found at 34-155 (LYRKLVAKDG…GNHYDIVYPI (122 aa)). The interval 39-45 (VAKDGSC) is cys-loop. Aspartate 42 is an active-site residue. Cysteine 45 functions as the Nucleophile in the catalytic mechanism. Residues 94 to 104 (LENPQEWVGQV) form a variable-loop region. Position 120 is a phosphotyrosine (tyrosine 120). A phosphoserine mark is found at serine 126 and serine 128. Residue threonine 131 is modified to Phosphothreonine. The his-loop stretch occupies residues 143-148 (FSNGNH). Residue histidine 148 is part of the active site. Phosphoserine is present on residues serine 166, serine 199, serine 202, and serine 204. Over residues 195–206 (EESNSEISDSED) the composition is skewed to acidic residues. Disordered regions lie at residues 195–239 (EESN…SADL) and 322–431 (KHTP…DFDH). The span at 226–236 (GSENPKNNGNS) shows a compositional bias: polar residues. A Phosphoserine modification is found at serine 340. Residues 392-403 (SSHSTGSQSQKS) are compositionally biased toward low complexity. Over residues 419 to 431 (RKPDRERAEDFDH) the composition is skewed to basic and acidic residues. Tyrosine 438 carries the phosphotyrosine modification. Serine 442 carries the phosphoserine modification. Tyrosine 459 carries the post-translational modification Phosphotyrosine. Positions 470–568 (PALSSSSVSQ…KPAEHIPLSN (99 aa)) are disordered. Low complexity predominate over residues 473–486 (SSSSVSQSPSQNSN). A compositionally biased stretch (basic and acidic residues) spans 495–528 (HARDRKGSMRRADAEERKDKDSLRGHTHVDKKPE). Residues serine 544 and serine 895 each carry the phosphoserine modification. The segment at 918-1107 (LSAASVSSKH…MGDGHRGQHT (190 aa)) is disordered. Positions 963–994 (NREREPGSAEPEPKRTIQSLKEKPEKVKDPKT) are enriched in basic and acidic residues. Serine 1000, serine 1005, serine 1016, and serine 1017 each carry phosphoserine. Residues 1032 to 1041 (SKQFYNQTYG) show a composition bias toward polar residues. Serine 1042 carries the phosphoserine modification. 2 stretches are compositionally biased toward basic and acidic residues: residues 1060 to 1079 (VRGE…EGYQ) and 1089 to 1107 (YRGD…GQHT).

Interacts with MYD88; the interaction is direct. Interacts with ALKBH3; the interaction is direct. Interacts with USP7; the interaction is direct. Interacts with USP9X; the interaction is direct. In terms of processing, phosphorylation at Ser-202 and Ser-204 activates 'Lys-63'-specific deubiquitinase activity. Induced upon stimulation with IL1B.

It localises to the cytoplasm. The protein localises to the nucleus. The catalysed reaction is Thiol-dependent hydrolysis of ester, thioester, amide, peptide and isopeptide bonds formed by the C-terminal Gly of ubiquitin (a 76-residue protein attached to proteins as an intracellular targeting signal).. Its activity is regulated as follows. Phosphorylation on Ser-202 and Ser-204 induces 'Lys-63'-specific deubiquitinase activity. Deubiquitinase which hydrolyzes the isopeptide bond between the ubiquitin C-terminus and the lysine epsilon-amino group of the target protein. May negatively regulate inflammatory and pathogen recognition signaling in innate immune response. Upon phosphorylation at Ser-202 and Ser-204 residues, via IL-1 receptor and Toll-like receptor signaling pathway, specifically deubiquitinates 'Lys-63'-polyubiquitinated MYD88 adapter protein triggering down-regulation of NF-kappa-B-dependent transcription of inflammatory mediators. Independently of the catalytic activity, acts as a scaffold for alternative deubiquitinases to assemble specific deubiquitinase-substrate complexes. Associates with USP7 and USP9X deubiquitinases to stabilize alkylation repair enzyme ALKBH3, thereby promoting the repair of alkylated DNA lesions. The sequence is that of OTU domain-containing protein 4 from Mus musculus (Mouse).